Reading from the N-terminus, the 338-residue chain is Lipoate-protein ligase A (338 aa).

Positions 29 to 216 constitute a BPL/LPL catalytic domain; sequence PATQRVLFLW…AFFAHYGERV (188 aa). Residues Arg71, 76 to 79, and Lys134 each bind ATP; that span reads GAVF. Lys134 contacts (R)-lipoate.

This sequence belongs to the LplA family. Monomer.

It is found in the cytoplasm. The enzyme catalyses L-lysyl-[lipoyl-carrier protein] + (R)-lipoate + ATP = N(6)-[(R)-lipoyl]-L-lysyl-[lipoyl-carrier protein] + AMP + diphosphate + H(+). Its pathway is protein modification; protein lipoylation via exogenous pathway; protein N(6)-(lipoyl)lysine from lipoate: step 1/2. It participates in protein modification; protein lipoylation via exogenous pathway; protein N(6)-(lipoyl)lysine from lipoate: step 2/2. Catalyzes both the ATP-dependent activation of exogenously supplied lipoate to lipoyl-AMP and the transfer of the activated lipoyl onto the lipoyl domains of lipoate-dependent enzymes. This chain is Lipoate-protein ligase A, found in Shigella boydii serotype 18 (strain CDC 3083-94 / BS512).